We begin with the raw amino-acid sequence, 200 residues long: Probable molybdenum cofactor guanylyltransferase (200 aa).

GTP is bound by residues Leu-9–Gly-11, Lys-21, Asp-69, and Asp-100. A Mg(2+)-binding site is contributed by Asp-100.

The protein belongs to the MobA family. Requires Mg(2+) as cofactor.

It is found in the cytoplasm. It carries out the reaction Mo-molybdopterin + GTP + H(+) = Mo-molybdopterin guanine dinucleotide + diphosphate. Its function is as follows. Transfers a GMP moiety from GTP to Mo-molybdopterin (Mo-MPT) cofactor (Moco or molybdenum cofactor) to form Mo-molybdopterin guanine dinucleotide (Mo-MGD) cofactor. In Bacillus cereus (strain B4264), this protein is Probable molybdenum cofactor guanylyltransferase.